The sequence spans 413 residues: Multidrug resistance protein MdtM (413 aa).

Residues 1 to 14 (MQRIIQFFSQRATT) are Cytoplasmic-facing. The helical transmembrane segment at 15 to 35 (LFFPMALILYDFAAYLTTDLI) threads the bilayer. Residues 36–51 (QPGIINVVRDFNADVS) lie on the Periplasmic side of the membrane. A helical transmembrane segment spans residues 52–72 (LAPASVSLYLAGGMALQWLLG). The Cytoplasmic segment spans residues 73–81 (PLSDRIGRR). The chain crosses the membrane as a helical span at residues 82 to 102 (PVLIAGALIFTLACAATLLTT). The Periplasmic segment spans residues 103-106 (SMTQ). Residues 107 to 127 (FLVARFVQGTSICFIATVGYV) form a helical membrane-spanning segment. Residues 128–140 (TVQEAFGQTKAIK) are Cytoplasmic-facing. Residues 141-161 (LMAIITSIVLVAPVIGPLSGA) form a helical membrane-spanning segment. Residues 162–170 (ALMHFVHWK) are Periplasmic-facing. Residues 171–191 (VLFGIIAVMGLLALCGLLLAM) form a helical membrane-spanning segment. Residues 192–225 (PETVQRGAVPFSAVSVLRDFRNVFRNPIFLTGAA) are Cytoplasmic-facing. A helical membrane pass occupies residues 226 to 246 (TLSLSYIPMMSWVAVSPVILI). The Periplasmic portion of the chain corresponds to 247-254 (DAGGMSTS). A helical transmembrane segment spans residues 255-275 (QFAWAQVPVFGAVIVANMIVV). Topologically, residues 276 to 289 (RLVKDPTRPRFIWR) are cytoplasmic. Helical transmembrane passes span 290 to 310 (AVPI…LLPH) and 311 to 331 (VWLW…MIFP). Over 332–351 (TLFRFTLFSNNLPKGTVSAS) the chain is Cytoplasmic. Residues 352 to 372 (LNMVILTVMAVSVEVGRWLWF) form a helical membrane-spanning segment. At 373–376 (HGGR) the chain is on the periplasmic side. Residues 377–397 (LPFHLLAAVAGVIVVFTLATL) traverse the membrane as a helical segment. Residues 398 to 413 (LQRVRQHEAAELAAEK) lie on the Cytoplasmic side of the membrane.

The protein belongs to the major facilitator superfamily.

The protein resides in the cell inner membrane. In terms of biological role, proton-dependent efflux pump. Confers resistance to a broad spectrum of chemically unrelated substrates. This chain is Multidrug resistance protein MdtM (mdtM), found in Salmonella typhimurium (strain LT2 / SGSC1412 / ATCC 700720).